The following is an 817-amino-acid chain: Lon protease (817 aa).

Residues 44–239 enclose the Lon N-terminal domain; that stretch reads LPILPLRNTV…ETLRYMNVEL (196 aa). 390–397 contacts ATP; that stretch reads GPPGVGKT. The Lon proteolytic domain maps to 626 to 807; sequence NDVAGVVTGL…SEVLAIALTD (182 aa). Catalysis depends on residues Ser-713 and Lys-756.

The protein belongs to the peptidase S16 family. As to quaternary structure, homohexamer. Organized in a ring with a central cavity.

The protein localises to the cytoplasm. The enzyme catalyses Hydrolysis of proteins in presence of ATP.. In terms of biological role, ATP-dependent serine protease that mediates the selective degradation of mutant and abnormal proteins as well as certain short-lived regulatory proteins. Required for cellular homeostasis and for survival from DNA damage and developmental changes induced by stress. Degrades polypeptides processively to yield small peptide fragments that are 5 to 10 amino acids long. Binds to DNA in a double-stranded, site-specific manner. In Flavobacterium johnsoniae (strain ATCC 17061 / DSM 2064 / JCM 8514 / BCRC 14874 / CCUG 350202 / NBRC 14942 / NCIMB 11054 / UW101) (Cytophaga johnsonae), this protein is Lon protease.